The chain runs to 156 residues: Regulatory protein RecX (156 aa).

Belongs to the RecX family.

Its subcellular location is the cytoplasm. Its function is as follows. Modulates RecA activity. This chain is Regulatory protein RecX, found in Pseudomonas putida (strain ATCC 700007 / DSM 6899 / JCM 31910 / BCRC 17059 / LMG 24140 / F1).